The chain runs to 413 residues: Multifunctional CCA protein (413 aa).

Positions 8 and 11 each coordinate ATP. Residues Gly8 and Arg11 each coordinate CTP. Mg(2+)-binding residues include Asp21 and Asp23. The ATP site is built by Arg91, Arg137, and Arg140. Positions 91, 137, and 140 each coordinate CTP. In terms of domain architecture, HD spans 228-329 (TGLHTLMTVT…VKLFDSIDAW (102 aa)).

It belongs to the tRNA nucleotidyltransferase/poly(A) polymerase family. Bacterial CCA-adding enzyme type 1 subfamily. Monomer. Can also form homodimers and oligomers. It depends on Mg(2+) as a cofactor. Ni(2+) serves as cofactor.

The catalysed reaction is a tRNA precursor + 2 CTP + ATP = a tRNA with a 3' CCA end + 3 diphosphate. The enzyme catalyses a tRNA with a 3' CCA end + 2 CTP + ATP = a tRNA with a 3' CCACCA end + 3 diphosphate. Catalyzes the addition and repair of the essential 3'-terminal CCA sequence in tRNAs without using a nucleic acid template. Adds these three nucleotides in the order of C, C, and A to the tRNA nucleotide-73, using CTP and ATP as substrates and producing inorganic pyrophosphate. tRNA 3'-terminal CCA addition is required both for tRNA processing and repair. Also involved in tRNA surveillance by mediating tandem CCA addition to generate a CCACCA at the 3' terminus of unstable tRNAs. While stable tRNAs receive only 3'-terminal CCA, unstable tRNAs are marked with CCACCA and rapidly degraded. The sequence is that of Multifunctional CCA protein from Klebsiella pneumoniae subsp. pneumoniae (strain ATCC 700721 / MGH 78578).